The following is a 1651-amino-acid chain: Putative serine/threonine-protein kinase/receptor R818 (1651 aa).

A signal peptide spans 1 to 19; the sequence is MKSIGIFVVALWLTHFCDG. N-linked (GlcNAc...) asparagine; by host glycans are attached at residues Asn111, Asn135, Asn190, Asn236, Asn275, Asn276, Asn287, Asn452, Asn455, Asn477, Asn495, Asn540, Asn596, and Asn722. The chain crosses the membrane as a helical span at residues 749-769; it reads IILAIVIPVSFVICCIIIVLV. The Protein kinase 1 domain maps to 793 to 1057; the sequence is LDFMESLGSG…EIMTKLSTLI (265 aa). Residues 799–807 and Lys820 each bind ATP; that span reads LGSGGSGEV. Catalysis depends on Asp915, which acts as the Proton acceptor. The interval 1089–1115 is disordered; that stretch reads IHNNDETKNSFGSTTYGSNTISSSSNT. Low complexity predominate over residues 1100–1115; the sequence is GSTTYGSNTISSSSNT. A Guanylate cyclase domain is found at 1135-1278; the sequence is IIVFTDIISA…VTVNIAAKIT (144 aa). One can recognise a Protein kinase 2 domain in the interval 1394-1645; sequence IQIGKQIGVG…DVIMGLNDML (252 aa). ATP is bound by residues 1400-1408 and Lys1421; that span reads IGVGSYGIV. Catalysis depends on Asp1515, which acts as the Proton acceptor.

It is found in the membrane. It carries out the reaction L-seryl-[protein] + ATP = O-phospho-L-seryl-[protein] + ADP + H(+). It catalyses the reaction L-threonyl-[protein] + ATP = O-phospho-L-threonyl-[protein] + ADP + H(+). This chain is Putative serine/threonine-protein kinase/receptor R818, found in Acanthamoeba polyphaga mimivirus (APMV).